Reading from the N-terminus, the 313-residue chain is Ribosomal RNA small subunit methyltransferase H (313 aa).

S-adenosyl-L-methionine contacts are provided by residues 35-37, Asp55, Phe79, Asp101, and Gln108; that span reads GGH.

It belongs to the methyltransferase superfamily. RsmH family.

It localises to the cytoplasm. The enzyme catalyses cytidine(1402) in 16S rRNA + S-adenosyl-L-methionine = N(4)-methylcytidine(1402) in 16S rRNA + S-adenosyl-L-homocysteine + H(+). Its function is as follows. Specifically methylates the N4 position of cytidine in position 1402 (C1402) of 16S rRNA. The protein is Ribosomal RNA small subunit methyltransferase H of Escherichia coli O127:H6 (strain E2348/69 / EPEC).